The sequence spans 253 residues: DNA repair protein RecO (253 aa).

The protein belongs to the RecO family.

Involved in DNA repair and RecF pathway recombination. The polypeptide is DNA repair protein RecO (Dehalococcoides mccartyi (strain CBDB1)).